The primary structure comprises 144 residues: 3-hydroxyacyl-[acyl-carrier-protein] dehydratase FabZ (144 aa).

H51 is a catalytic residue.

This sequence belongs to the thioester dehydratase family. FabZ subfamily.

The protein resides in the cytoplasm. The enzyme catalyses a (3R)-hydroxyacyl-[ACP] = a (2E)-enoyl-[ACP] + H2O. In terms of biological role, involved in unsaturated fatty acids biosynthesis. Catalyzes the dehydration of short chain beta-hydroxyacyl-ACPs and long chain saturated and unsaturated beta-hydroxyacyl-ACPs. This is 3-hydroxyacyl-[acyl-carrier-protein] dehydratase FabZ from Clostridium botulinum (strain Langeland / NCTC 10281 / Type F).